The following is a 681-amino-acid chain: DNA-directed RNA polymerase subunit beta' (681 aa).

Zn(2+)-binding residues include Cys-69, Cys-71, Cys-87, and Cys-90. The Mg(2+) site is built by Asp-490, Asp-492, and Asp-494.

The protein belongs to the RNA polymerase beta' chain family. RpoC1 subfamily. As to quaternary structure, in plastids the minimal PEP RNA polymerase catalytic core is composed of four subunits: alpha, beta, beta', and beta''. When a (nuclear-encoded) sigma factor is associated with the core the holoenzyme is formed, which can initiate transcription. Requires Mg(2+) as cofactor. The cofactor is Zn(2+).

The protein localises to the plastid. The protein resides in the chloroplast. The catalysed reaction is RNA(n) + a ribonucleoside 5'-triphosphate = RNA(n+1) + diphosphate. In terms of biological role, DNA-dependent RNA polymerase catalyzes the transcription of DNA into RNA using the four ribonucleoside triphosphates as substrates. This Liriodendron tulipifera (Tuliptree) protein is DNA-directed RNA polymerase subunit beta'.